The primary structure comprises 262 residues: tRNA pseudouridine synthase A (262 aa).

D55 (nucleophile) is an active-site residue. A substrate-binding site is contributed by Y116.

This sequence belongs to the tRNA pseudouridine synthase TruA family. As to quaternary structure, homodimer.

It catalyses the reaction uridine(38/39/40) in tRNA = pseudouridine(38/39/40) in tRNA. Functionally, formation of pseudouridine at positions 38, 39 and 40 in the anticodon stem and loop of transfer RNAs. In Bdellovibrio bacteriovorus (strain ATCC 15356 / DSM 50701 / NCIMB 9529 / HD100), this protein is tRNA pseudouridine synthase A.